The sequence spans 147 residues: Methylglyoxal synthase (147 aa).

The region spanning 1–147 (MKGQRNIGMV…TPYVKRLGAK (147 aa)) is the MGS-like domain. Residues H12, K16, 38–41 (TGTT), and 59–60 (SG) contribute to the substrate site. The active-site Proton donor/acceptor is the D65. H92 contacts substrate.

It belongs to the methylglyoxal synthase family.

It catalyses the reaction dihydroxyacetone phosphate = methylglyoxal + phosphate. Catalyzes the formation of methylglyoxal from dihydroxyacetone phosphate. The sequence is that of Methylglyoxal synthase from Oleidesulfovibrio alaskensis (strain ATCC BAA-1058 / DSM 17464 / G20) (Desulfovibrio alaskensis).